Reading from the N-terminus, the 197-residue chain is Probable inosine/xanthosine triphosphatase (197 aa).

9-14 (TSNPIK) contributes to the substrate binding site. Mg(2+) contacts are provided by aspartate 36 and aspartate 65.

It belongs to the YjjX NTPase family. As to quaternary structure, homodimer. Mg(2+) serves as cofactor. It depends on Mn(2+) as a cofactor.

It catalyses the reaction XTP + H2O = XDP + phosphate + H(+). The enzyme catalyses ITP + H2O = IDP + phosphate + H(+). Its function is as follows. Phosphatase that hydrolyzes non-canonical purine nucleotides such as XTP and ITP to their respective diphosphate derivatives. Probably excludes non-canonical purines from DNA/RNA precursor pool, thus preventing their incorporation into DNA/RNA and avoiding chromosomal lesions. The sequence is that of Probable inosine/xanthosine triphosphatase from Aeropyrum pernix (strain ATCC 700893 / DSM 11879 / JCM 9820 / NBRC 100138 / K1).